The chain runs to 166 residues: Orotate phosphoribosyltransferase (166 aa).

Residues Arg83, Lys84, His89, and 109–117 (DDVATTGGS) contribute to the 5-phospho-alpha-D-ribose 1-diphosphate site. Residues Thr113 and Arg141 each contribute to the orotate site.

This sequence belongs to the purine/pyrimidine phosphoribosyltransferase family. PyrE subfamily. Homodimer. Requires Mg(2+) as cofactor.

It catalyses the reaction orotidine 5'-phosphate + diphosphate = orotate + 5-phospho-alpha-D-ribose 1-diphosphate. It functions in the pathway pyrimidine metabolism; UMP biosynthesis via de novo pathway; UMP from orotate: step 1/2. Functionally, catalyzes the transfer of a ribosyl phosphate group from 5-phosphoribose 1-diphosphate to orotate, leading to the formation of orotidine monophosphate (OMP). In Picrophilus torridus (strain ATCC 700027 / DSM 9790 / JCM 10055 / NBRC 100828 / KAW 2/3), this protein is Orotate phosphoribosyltransferase.